A 259-amino-acid chain; its full sequence is Putative deoxyribonuclease TATDN1 homolog (259 aa).

Glu-82, His-116, His-138, and Asp-186 together coordinate a divalent metal cation.

The protein belongs to the metallo-dependent hydrolases superfamily. TatD-type hydrolase family. It depends on a divalent metal cation as a cofactor.

It is found in the nucleus. Functionally, putative deoxyribonuclease. The chain is Putative deoxyribonuclease TATDN1 homolog from Vairimorpha ceranae (strain BRL01) (Microsporidian parasite).